A 729-amino-acid chain; its full sequence is Leucine-rich repeat flightless-interacting protein 1 (729 aa).

N-acetylthreonine is present on Thr-2. Residue Ser-16 is modified to Phosphoserine. The span at 40-65 (IRMKELERQQKEVEERPDKDFAEKGS) shows a compositional bias: basic and acidic residues. Positions 40–98 (IRMKELERQQKEVEERPDKDFAEKGSRNMPSLSAATLASLGGTSSRRGSGDTSISMDTE) are disordered. Positions 78–94 (SLGGTSSRRGSGDTSIS) are enriched in low complexity. Residues Ser-83, Ser-84, Ser-88, Asp-90, Ser-92, and Thr-97 each carry the phosphoserine modification. Residues 94-194 (SMDTEASIRE…LRQREEMLEK (101 aa)) are a coiled coil. Residue Lys-249 forms a Glycyl lysine isopeptide (Lys-Gly) (interchain with G-Cter in SUMO1) linkage. The disordered stretch occupies residues 253–729 (VEKVGQRETL…SKSKEDCTMS (477 aa)). Polar residues predominate over residues 260–272 (ETLQNSEQEQPKP). A compositionally biased stretch (basic and acidic residues) spans 277 to 297 (DCVDRGVSHPGEKAENQRPAE). Ser-302 is subject to Phosphoserine. Residues 313–326 (QQVQSQDQENTSDL) are compositionally biased toward polar residues. Residues 327–343 (KNSEQIESHKVTNKSDS) are compositionally biased toward basic and acidic residues. Residues 344-354 (RASNSPEQSSC) are compositionally biased toward polar residues. 2 positions are modified to phosphoserine: Ser-346 and Ser-348. Composition is skewed to basic and acidic residues over residues 435–445 (KGTENHGESCL) and 482–494 (KADD…EKPI). Residues 465–567 (EEAIVQIPQA…KNKKKKAATP (103 aa)) form a DNA-binding region. Residues 506 to 523 (INQSGHQDTTGPGSTDAQ) show a composition bias toward polar residues. 2 positions are modified to phosphoserine: Ser-538 and Ser-547. Positions 550–564 (KKTKNKKKKNKKKKA) are enriched in basic residues. Residues 608–618 (QKIRAGSREPV) show a composition bias toward basic and acidic residues. 2 positions are modified to phosphoserine: Ser-614 and Ser-670. Polar residues-rich tracts occupy residues 667-684 (CDTS…SQHG) and 693-710 (LDNS…SESG). A compositionally biased stretch (basic and acidic residues) spans 713–729 (AREEVGNSKSKEDCTMS).

The protein belongs to the LRRFIP family. Homodimer. May also form higher oligomers. Interacts with FLII. Interacts with MYD88. Competes with FLII for MyD88-binding, even in the absence of LPS. Ubiquitously expressed.

The protein localises to the nucleus. It localises to the cytoplasm. Its function is as follows. Transcriptional repressor which preferentially binds to the GC-rich consensus sequence (5'-AGCCCCCGGCG-3') and may regulate expression of TNF, EGFR and PDGFA. May control smooth muscle cells proliferation following artery injury through PDGFA repression. May also bind double-stranded RNA. Positively regulates Toll-like receptor (TLR) signaling in response to agonist probably by competing with the negative FLII regulator for MYD88-binding. This Mus musculus (Mouse) protein is Leucine-rich repeat flightless-interacting protein 1 (Lrrfip1).